The chain runs to 496 residues: Rhamnulokinase (496 aa).

Position 13–17 (13–17 (ASSGR)) interacts with ATP. Residues glycine 83 and 236–238 (HDT) each bind substrate. The active-site Proton acceptor is aspartate 237. Position 259 (threonine 259) interacts with ATP. A substrate-binding site is contributed by asparagine 296. ATP is bound at residue glutamine 304. Residues cysteine 353 and cysteine 370 are joined by a disulfide bond. Position 402 (glycine 402) interacts with ATP. Residues cysteine 413 and cysteine 417 are joined by a disulfide bond.

Belongs to the rhamnulokinase family. Mg(2+) serves as cofactor.

It catalyses the reaction L-rhamnulose + ATP = L-rhamnulose 1-phosphate + ADP + H(+). It participates in carbohydrate degradation; L-rhamnose degradation; glycerone phosphate from L-rhamnose: step 2/3. In terms of biological role, involved in the catabolism of L-rhamnose (6-deoxy-L-mannose). Catalyzes the transfer of the gamma-phosphate group from ATP to the 1-hydroxyl group of L-rhamnulose to yield L-rhamnulose 1-phosphate. The sequence is that of Rhamnulokinase from Pectobacterium atrosepticum (strain SCRI 1043 / ATCC BAA-672) (Erwinia carotovora subsp. atroseptica).